Consider the following 152-residue polypeptide: Cell division protein SepF (152 aa).

Residues 21–56 (EYIETEQDHPEEHEQQKDKQPAYAQKPQGKQNVVSL) form a disordered region. The span at 26–40 (EQDHPEEHEQQKDKQ) shows a compositional bias: basic and acidic residues.

It belongs to the SepF family. Homodimer. Interacts with FtsZ.

It is found in the cytoplasm. In terms of biological role, cell division protein that is part of the divisome complex and is recruited early to the Z-ring. Probably stimulates Z-ring formation, perhaps through the cross-linking of FtsZ protofilaments. Its function overlaps with FtsA. The protein is Cell division protein SepF of Bacillus velezensis (strain DSM 23117 / BGSC 10A6 / LMG 26770 / FZB42) (Bacillus amyloliquefaciens subsp. plantarum).